The primary structure comprises 515 residues: Peroxisomal catalase A (515 aa).

Position 2 is an N-acetylserine (S2). Catalysis depends on residues H70 and N143. Residue Y355 participates in heme binding. The short motif at 513–515 (SKF) is the Microbody targeting signal element.

This sequence belongs to the catalase family. In terms of assembly, homotetramer. Heme is required as a cofactor.

It localises to the peroxisome matrix. The catalysed reaction is 2 H2O2 = O2 + 2 H2O. Catalyzes the degradation of hydrogen peroxide (H(2)O(2)) generated by peroxisomal oxidases to water and oxygen, thereby protecting cells from the toxic effects of hydrogen peroxide. This is Peroxisomal catalase A (CTA1) from Saccharomyces cerevisiae (strain ATCC 204508 / S288c) (Baker's yeast).